The following is a 293-amino-acid chain: MLDVNKKILMTGATSFVGTHLLHSLIKEGYSIIALKRPITEPTIINTLIEWLNIQDIEKICQSSMNIHAIVHIATDYGRNRTPISEQYKCNVLLPTRLLELMPALKTKFFISTDSFFGKYEKHYGYMRSYMASKRHFVELSKIYVEEHPDVCFINLRLEHVYGERDKAGKIIPYVIKKMKNNEDIDCTIARQKRDFIYIDDVVSAYLKILKEGFNAGHYDVEVGTGKSIELKEVFEIIKKETHSSSKINYGAVAMRDDEIMESHANTSFLTRLGWSAEFSIEKGVKKMLSMKE.

Threonine 113 is a substrate binding site. Residue tyrosine 130 is the Proton acceptor of the active site.

It belongs to the NAD(P)-dependent epimerase/dehydratase family.

The enzyme catalyses CDP-alpha-D-abequose + NADP(+) = CDP-4-dehydro-3,6-dideoxy-alpha-D-glucose + NADPH + H(+). It participates in bacterial outer membrane biogenesis; LPS O-antigen biosynthesis. The chain is CDP-abequose synthase from Salmonella muenchen.